The chain runs to 121 residues: uncharacterized protein (121 aa).

A coiled-coil region spans residues 8-37 (KQLMVCRDEIKKLKLKEKEAKNRILTYLKN).

This is an uncharacterized protein from Aedes vexans (Inland floodwater mosquito).